The primary structure comprises 505 residues: Flagellin (505 aa).

The protein belongs to the bacterial flagellin family.

The protein resides in the secreted. The protein localises to the bacterial flagellum. In terms of biological role, flagellin is the subunit protein which polymerizes to form the filaments of bacterial flagella. This Salmonella moscow protein is Flagellin (fliC).